Reading from the N-terminus, the 705-residue chain is Glycogen [starch] synthase isoform 2 (705 aa).

Position 20 (Arg20) interacts with UDP. The residue at position 159 (Ser159) is a Phosphoserine. UDP-alpha-D-glucose is bound by residues His193 and Arg199. Alpha-D-glucose 6-phosphate contacts are provided by His280, Glu281, Gln283, His286, and Lys290. Arg320 is a UDP binding site. Residue Arg320 participates in UDP-alpha-D-glucose binding. Ser363 and Ser467 each carry phosphoserine. His500 provides a ligand contact to alpha-D-glucose 6-phosphate. UDP-alpha-D-glucose is bound by residues Glu509, Trp511, and Gly512. Thr514 is a binding site for UDP. Arg583 and Arg587 together coordinate alpha-D-glucose 6-phosphate. A Phosphoserine modification is found at Ser651. Residue Ser655 is modified to Phosphoserine; by PHO85. Phosphoserine; by PKA is present on residues Ser661 and Ser663. Thr668 bears the Phosphothreonine; by PHO85 mark. The interval 686–705 (SLGVNPAADDDDDGPYADDS) is disordered. A compositionally biased stretch (acidic residues) spans 693–705 (ADDDDDGPYADDS).

It belongs to the glycosyltransferase 3 family. In terms of assembly, interacts with PCL10. Phosphorylated by the cyclin-CDK PCL10-PHO85. Phosphorylation causes inactivation of enzyme.

The protein resides in the cytoplasm. Its subcellular location is the cytosol. It carries out the reaction [(1-&gt;4)-alpha-D-glucosyl](n) + UDP-alpha-D-glucose = [(1-&gt;4)-alpha-D-glucosyl](n+1) + UDP + H(+). The protein operates within glycan biosynthesis; glycogen biosynthesis. With respect to regulation, allosteric activation by glucose-6-phosphate, and phosphorylation by a cAMP-dependent kinase. Glycogen synthase participates in the glycogen biosynthetic process along with glycogenin and glycogen branching enzyme. Extends the primer composed of a few glucose units formed by glycogenin by adding new glucose units to it. In this context, glycogen synthase transfers the glycosyl residue from UDP-Glc to the non-reducing end of alpha-1,4-glucan. This Saccharomyces cerevisiae (strain ATCC 204508 / S288c) (Baker's yeast) protein is Glycogen [starch] synthase isoform 2 (GSY2).